The primary structure comprises 69 residues: uncharacterized protein (69 aa).

This is an uncharacterized protein from Escherichia coli O157:H7.